A 284-amino-acid chain; its full sequence is Extracellular metalloprotease VDBG_01143 (284 aa).

The first 18 residues, 1–18, serve as a signal peptide directing secretion; the sequence is MLFKSLFVAAATAVGVSG. N-linked (GlcNAc...) asparagine glycosylation occurs at asparagine 58. Position 200 (histidine 200) interacts with Zn(2+). Residue glutamate 201 is part of the active site. Histidine 204 contributes to the Zn(2+) binding site. Cysteines 236 and 263 form a disulfide.

The protein belongs to the peptidase M43B family.

The protein resides in the secreted. In terms of biological role, secreted metalloproteinase that allows assimilation of proteinaceous substrates. The sequence is that of Extracellular metalloprotease VDBG_01143 from Verticillium alfalfae (strain VaMs.102 / ATCC MYA-4576 / FGSC 10136) (Verticillium wilt of alfalfa).